The primary structure comprises 122 residues: Copper metallothionein 1 (122 aa).

Residues 1 to 35 (MACNCPPQKNTACCSTSEAQDKCTCQKGNCECKAC) form a cys-rich copper-binding 1 region. The spacer B1 stretch occupies residues 36-50 (PNSTKTSESGGKAST). Residues 51–72 (CNCGGSGEACTCPPGQCACDKC) form a cys-rich copper-binding 2 region. Residues 73 to 81 (PKKAKSVST) form a spacer B2 region. Residues 82 to 103 (CGCGGSGAACSCPPGKCACDNC) are cys-rich copper-binding 3. Positions 104 to 113 (PKQAQEKVSS) are spacer B3. The cys-rich copper-binding 4 stretch occupies residues 114-122 (CACSGSGAA).

It belongs to the metallothionein superfamily.

The protein localises to the cytoplasm. It localises to the cell cortex. Copper metallothionein that protects the cell against copper toxicity by tightly chelating copper ions. Required for antioxidant-mediated growth rescue in the presence of fluconazole. Acts as a critical factors for lung colonization and virulence. This Cryptococcus neoformans var. grubii serotype A (strain H99 / ATCC 208821 / CBS 10515 / FGSC 9487) (Filobasidiella neoformans var. grubii) protein is Copper metallothionein 1.